We begin with the raw amino-acid sequence, 325 residues long: Hydroxymethylglutaryl-CoA lyase, mitochondrial (325 aa).

A mitochondrion-targeting transit peptide spans 1–27 (MASVRKAFPRRLVGLTSLRAVSTSSMG). Positions 33–300 (VKIVEVGPRD…HTGVNLQKLL (268 aa)) constitute a Pyruvate carboxyltransferase domain. R41 is a substrate binding site. Residue D42 coordinates a divalent metal cation. K48 bears the N6-acetyllysine; alternate mark. N6-succinyllysine; alternate is present on K48. K111 is modified (N6-acetyllysine). Residues K137 and K179 each carry the N6-acetyllysine; alternate modification. K137 and K179 each carry N6-succinyllysine; alternate. A divalent metal cation contacts are provided by H233 and H235. The active site involves C266. An a divalent metal cation-binding site is contributed by N275. A Microbody targeting signal motif is present at residues 323–325 (CKL). K324 is subject to N6-acetyllysine.

The protein belongs to the HMG-CoA lyase family. Homodimer; disulfide-linked. Can also form homotetramers.

The protein localises to the mitochondrion matrix. It is found in the peroxisome. It carries out the reaction (3S)-3-hydroxy-3-methylglutaryl-CoA = acetoacetate + acetyl-CoA. It functions in the pathway metabolic intermediate metabolism; (S)-3-hydroxy-3-methylglutaryl-CoA degradation; acetoacetate from (S)-3-hydroxy-3-methylglutaryl-CoA: step 1/1. Mitochondrial 3-hydroxy-3-methylglutaryl-CoA lyase that catalyzes a cation-dependent cleavage of (S)-3-hydroxy-3-methylglutaryl-CoA into acetyl-CoA and acetoacetate, a key step in ketogenesis. Terminal step in leucine catabolism. Ketone bodies (beta-hydroxybutyrate, acetoacetate and acetone) are essential as an alternative source of energy to glucose, as lipid precursors and as regulators of metabolism. The sequence is that of Hydroxymethylglutaryl-CoA lyase, mitochondrial (Hmgcl) from Mus musculus (Mouse).